The sequence spans 213 residues: Octanoyltransferase (213 aa).

The BPL/LPL catalytic domain occupies 32–207; it reads ENSHDEIWLV…NILALLNNPP (176 aa). Residues 71-78, 138-140, and 151-153 each bind substrate; these read RGGQVTYH, SLG, and GLA. Cysteine 169 serves as the catalytic Acyl-thioester intermediate.

The protein belongs to the LipB family.

The protein resides in the cytoplasm. It carries out the reaction octanoyl-[ACP] + L-lysyl-[protein] = N(6)-octanoyl-L-lysyl-[protein] + holo-[ACP] + H(+). Its pathway is protein modification; protein lipoylation via endogenous pathway; protein N(6)-(lipoyl)lysine from octanoyl-[acyl-carrier-protein]: step 1/2. Its function is as follows. Catalyzes the transfer of endogenously produced octanoic acid from octanoyl-acyl-carrier-protein onto the lipoyl domains of lipoate-dependent enzymes. Lipoyl-ACP can also act as a substrate although octanoyl-ACP is likely to be the physiological substrate. This chain is Octanoyltransferase, found in Salmonella typhi.